The primary structure comprises 461 residues: Tubulin gamma-2 chain (461 aa).

142–148 (AGGTGSG) is a GTP binding site.

It belongs to the tubulin family.

It is found in the cytoplasm. Its subcellular location is the cytoskeleton. It localises to the microtubule organizing center. The protein localises to the centrosome. In terms of biological role, tubulin is the major constituent of microtubules. The gamma chain is found at microtubule organizing centers (MTOC) such as the spindle poles or the centrosome, suggesting that it is involved in the minus-end nucleation of microtubule assembly. This chain is Tubulin gamma-2 chain, found in Euplotoides octocarinatus (Freshwater ciliate).